The chain runs to 409 residues: 8-amino-7-oxononanoate synthase (409 aa).

Arginine 20 is a binding site for substrate. Residue 116 to 117 (GY) coordinates pyridoxal 5'-phosphate. Residue histidine 141 coordinates substrate. Pyridoxal 5'-phosphate is bound by residues serine 187, histidine 215, and threonine 243. Lysine 246 is modified (N6-(pyridoxal phosphate)lysine). Threonine 369 contacts substrate.

The protein belongs to the class-II pyridoxal-phosphate-dependent aminotransferase family. BioF subfamily. As to quaternary structure, homodimer. Pyridoxal 5'-phosphate serves as cofactor.

It catalyses the reaction 6-carboxyhexanoyl-[ACP] + L-alanine + H(+) = (8S)-8-amino-7-oxononanoate + holo-[ACP] + CO2. It functions in the pathway cofactor biosynthesis; biotin biosynthesis. Catalyzes the decarboxylative condensation of pimeloyl-[acyl-carrier protein] and L-alanine to produce 8-amino-7-oxononanoate (AON), [acyl-carrier protein], and carbon dioxide. This Polaromonas naphthalenivorans (strain CJ2) protein is 8-amino-7-oxononanoate synthase.